The chain runs to 241 residues: 2-heptyl-1-hydroxyquinolin-4(1H)-one methyltransferase (241 aa).

Belongs to the methyltransferase superfamily. In terms of assembly, monomer.

The protein localises to the cytoplasm. The enzyme catalyses 2-heptyl-1-hydroxy-4(1H)-quinolinone + S-adenosyl-L-methionine = 2-heptyl-1-methoxy-4(1H)-quinolinone + S-adenosyl-L-homocysteine + H(+). Functionally, involved in cellular response to chemical stress and may contribute to resistance toward antimicrobial natural compounds as well as drugs. Catalyzes the methylation and detoxification of the P.aeruginosa toxin 2-heptyl-1-hydroxy-4(1H)-quinolinone (HQNO) to 2-heptyl-1-methoxy-4(1H)-quinolinone (HMOQ). In Mycobacterium bovis (strain BCG / Pasteur 1173P2), this protein is 2-heptyl-1-hydroxyquinolin-4(1H)-one methyltransferase.